A 911-amino-acid chain; its full sequence is Protein translocase subunit SecA (911 aa).

Residues Gln86, 104 to 108 (GEGKT), and Asp512 contribute to the ATP site. The Zn(2+) site is built by Cys895, Cys897, Cys906, and His907.

Belongs to the SecA family. In terms of assembly, monomer and homodimer. Part of the essential Sec protein translocation apparatus which comprises SecA, SecYEG and auxiliary proteins SecDF-YajC and YidC. The cofactor is Zn(2+).

The protein resides in the cell inner membrane. The protein localises to the cytoplasm. It carries out the reaction ATP + H2O + cellular proteinSide 1 = ADP + phosphate + cellular proteinSide 2.. In terms of biological role, part of the Sec protein translocase complex. Interacts with the SecYEG preprotein conducting channel. Has a central role in coupling the hydrolysis of ATP to the transfer of proteins into and across the cell membrane, serving both as a receptor for the preprotein-SecB complex and as an ATP-driven molecular motor driving the stepwise translocation of polypeptide chains across the membrane. This chain is Protein translocase subunit SecA, found in Bordetella bronchiseptica (strain ATCC BAA-588 / NCTC 13252 / RB50) (Alcaligenes bronchisepticus).